Here is an 87-residue protein sequence, read N- to C-terminus: Mitochondrial import inner membrane translocase subunit TIM9 (87 aa).

Positions 35–59 (CFSDCVNDFTSSKLTSKEQTCIMRC) match the Twin CX3C motif motif. Disulfide bonds link Cys-35–Cys-59 and Cys-39–Cys-55.

Belongs to the small Tim family. Heterohexamer; composed of 3 copies of TIM9 and 3 copies of TIM10, named soluble 70 kDa complex. Associates with the TIM22 complex, whose core is composed of TIM22 and TIM54. Interacts with the transmembrane regions of multi-pass transmembrane proteins in transit.

Its subcellular location is the mitochondrion inner membrane. Its function is as follows. Mitochondrial intermembrane chaperone that participates in the import and insertion of multi-pass transmembrane proteins into the mitochondrial inner membrane. Also required for the transfer of beta-barrel precursors from the TOM complex to the sorting and assembly machinery (SAM complex) of the outer membrane. Acts as a chaperone-like protein that protects the hydrophobic precursors from aggregation and guide them through the mitochondrial intermembrane space. The chain is Mitochondrial import inner membrane translocase subunit TIM9 (TIM9) from Eremothecium gossypii (strain ATCC 10895 / CBS 109.51 / FGSC 9923 / NRRL Y-1056) (Yeast).